A 118-amino-acid chain; its full sequence is Late cornified envelope protein 1B (118 aa).

A disordered region spans residues 87-118 (CHRPQSSGCCSQPSGGSSCCGGGSGQHSGGCC). The segment covering 90 to 103 (PQSSGCCSQPSGGS) has biased composition (low complexity). A compositionally biased stretch (gly residues) spans 104–118 (SCCGGGSGQHSGGCC).

Belongs to the LCE family. In terms of assembly, interacts with CYSRT1; the interaction is direct. In terms of tissue distribution, skin-specific. Expression was readily detected in adult trunk skin, adult arm skin, fetal skin, penal skin, vulva, esophagus and tongue. Not expressed in the cervix, rectum, lung, colon, or placenta.

Precursors of the cornified envelope of the stratum corneum. The protein is Late cornified envelope protein 1B (LCE1B) of Homo sapiens (Human).